The chain runs to 288 residues: Aquaporin PIP2-4 (288 aa).

The disordered stretch occupies residues 1–24 (MAKDIEASGPEAGEFSAKDYTDPP). 2 consecutive transmembrane segments (helical) span residues 42-62 (AVIA…ATVI) and 79-99 (CGGV…FILV). The short motif at 111–113 (NPA) is the NPA 1 element. Transmembrane regions (helical) follow at residues 130–150 (LLYI…VKGF), 172–192 (GTGL…VFSA), and 206–226 (VLAP…TIPI). Positions 232 to 234 (NPA) match the NPA 2 motif. A helical membrane pass occupies residues 254–274 (IFWVGPLIGAAIAAAYHQYVL).

Belongs to the MIP/aquaporin (TC 1.A.8) family. PIP (TC 1.A.8.11) subfamily. Homomers. May interact with PIP1-2 to form heteromers. In terms of tissue distribution, expressed in the root growing zone at 5-6 mm from the root tip.

It is found in the cell membrane. In terms of biological role, water channel required to facilitate the transport of water across cell membrane. Active as homomers. Increased activity when heteromerization with PIP1-2. The protein is Aquaporin PIP2-4 (PIP2-4) of Zea mays (Maize).